A 210-amino-acid polypeptide reads, in one-letter code: Protein GrpE (210 aa).

Residues 191 to 210 form a disordered region; that stretch reads KGGPKPAEAETNSVFDEKDA.

Belongs to the GrpE family. Homodimer.

The protein localises to the cytoplasm. Its function is as follows. Participates actively in the response to hyperosmotic and heat shock by preventing the aggregation of stress-denatured proteins, in association with DnaK and GrpE. It is the nucleotide exchange factor for DnaK and may function as a thermosensor. Unfolded proteins bind initially to DnaJ; upon interaction with the DnaJ-bound protein, DnaK hydrolyzes its bound ATP, resulting in the formation of a stable complex. GrpE releases ADP from DnaK; ATP binding to DnaK triggers the release of the substrate protein, thus completing the reaction cycle. Several rounds of ATP-dependent interactions between DnaJ, DnaK and GrpE are required for fully efficient folding. The protein is Protein GrpE of Rhizobium etli (strain CIAT 652).